Here is a 296-residue protein sequence, read N- to C-terminus: Peptide transport system permease protein SapC (296 aa).

The Cytoplasmic segment spans residues 1–28 (MPYDSVYSEKRPPGTLRTAWRKFYSDAS). A helical membrane pass occupies residues 29 to 49 (AMVGLYGCAGLAVLCIFGGWF). At 50 to 98 (APYGIDQQFLGYQLLPPSWSRYGEVSFFLGTDDLGRDVLSRLLSGAAPT) the chain is on the periplasmic side. The helical transmembrane segment at 99–119 (VGGAFVVTLAATICGLVLGTF) threads the bilayer. The region spanning 99–284 (VGGAFVVTLA…ISVLLVNLLG (186 aa)) is the ABC transmembrane type-1 domain. The Cytoplasmic portion of the chain corresponds to 120-133 (AGATHGLRSAVLNH). The chain crosses the membrane as a helical span at residues 134 to 154 (ILDTLLAIPSLLLAIIVVAFA). The Periplasmic segment spans residues 155–196 (GPSLSHAMFAVWLALLPRMVRSIYSMVHDELEKEYVIAARLD). The helical transmembrane segment at 197-217 (GASTLNILWFAVMPNITAGLV) threads the bilayer. The Cytoplasmic portion of the chain corresponds to 218-222 (TEITR). Residues 223-243 (ALSMAILDIAALGFLDLGAQL) form a helical membrane-spanning segment. At 244–257 (PSPEWGAMLGDALE) the chain is on the periplasmic side. The chain crosses the membrane as a helical span at residues 258–278 (LIYVAPWTVMLPGAAIMISVL). Over 279 to 296 (LVNLLGDGVRRAIIAGVE) the chain is Cytoplasmic.

It belongs to the binding-protein-dependent transport system permease family. OppBC subfamily.

Its subcellular location is the cell inner membrane. Its function is as follows. Involved in a peptide intake transport system that plays a role in the resistance to antimicrobial peptides. The polypeptide is Peptide transport system permease protein SapC (sapC) (Escherichia coli O6:H1 (strain CFT073 / ATCC 700928 / UPEC)).